Reading from the N-terminus, the 1254-residue chain is DNA-directed RNA polymerase subunit beta (1254 aa).

Belongs to the RNA polymerase beta chain family. The RNAP catalytic core consists of 2 alpha, 1 beta, 1 beta' and 1 omega subunit. When a sigma factor is associated with the core the holoenzyme is formed, which can initiate transcription.

It catalyses the reaction RNA(n) + a ribonucleoside 5'-triphosphate = RNA(n+1) + diphosphate. Its function is as follows. DNA-dependent RNA polymerase catalyzes the transcription of DNA into RNA using the four ribonucleoside triphosphates as substrates. This chain is DNA-directed RNA polymerase subunit beta, found in Protochlamydia amoebophila (strain UWE25).